We begin with the raw amino-acid sequence, 258 residues long: Regulatory protein RecX (258 aa).

It belongs to the RecX family.

Its subcellular location is the cytoplasm. Its function is as follows. Modulates RecA activity. This is Regulatory protein RecX from Streptococcus equi subsp. zooepidemicus (strain MGCS10565).